Reading from the N-terminus, the 189-residue chain is Protein seele (189 aa).

A signal peptide spans 1–17 (MLTKALILFGLLALAQG). The 154-residue stretch at 23 to 176 (REVKCHVCKA…EQASYCDESP (154 aa)) folds into the Saposin B-type domain. Intrachain disulfides connect Cys27–Cys172, Cys30–Cys165, and Cys85–Cys136. Positions 186 to 189 (KEEL) match the Prevents secretion from ER motif.

It belongs to the canopy family.

Its subcellular location is the endoplasmic reticulum. In terms of biological role, involved in embryonic dorsal-ventral patterning which is generated by a series of serine protease processing events where gd processes snk which cleaves ea which then processes spz into the activating ligand for the Toll receptor. Required during this process for the secretion of ea from the developing embryo into the perivitelline space and for ea processing. In Drosophila melanogaster (Fruit fly), this protein is Protein seele.